The following is a 656-amino-acid chain: UvrABC system protein B (656 aa).

One can recognise a Helicase ATP-binding domain in the interval 29–414 (KLSEFKTKQQ…SLSQNNVIEQ (386 aa)). Position 42–49 (42–49 (GATGTGKT)) interacts with ATP. Residues 95–118 (YFDFYQPEAYLPSKGIYIEKSATV) carry the Beta-hairpin motif. One can recognise a Helicase C-terminal domain in the interval 434-596 (QVEDLIEEII…KTPKTVVKPL (163 aa)). The 36-residue stretch at 614–649 (AALIKQLTKEMKKAAANQNYELAIEIRDSIFELEKE) folds into the UVR domain.

Belongs to the UvrB family. Forms a heterotetramer with UvrA during the search for lesions. Interacts with UvrC in an incision complex.

It is found in the cytoplasm. The UvrABC repair system catalyzes the recognition and processing of DNA lesions. A damage recognition complex composed of 2 UvrA and 2 UvrB subunits scans DNA for abnormalities. Upon binding of the UvrA(2)B(2) complex to a putative damaged site, the DNA wraps around one UvrB monomer. DNA wrap is dependent on ATP binding by UvrB and probably causes local melting of the DNA helix, facilitating insertion of UvrB beta-hairpin between the DNA strands. Then UvrB probes one DNA strand for the presence of a lesion. If a lesion is found the UvrA subunits dissociate and the UvrB-DNA preincision complex is formed. This complex is subsequently bound by UvrC and the second UvrB is released. If no lesion is found, the DNA wraps around the other UvrB subunit that will check the other stand for damage. This is UvrABC system protein B from Mycoplasma genitalium (strain ATCC 33530 / DSM 19775 / NCTC 10195 / G37) (Mycoplasmoides genitalium).